A 693-amino-acid chain; its full sequence is G1/S-specific cyclin CCN1 (693 aa).

The span at 273–298 (QKKQKKALSSNSSRTTTASYTHQNQS) shows a compositional bias: polar residues. Disordered regions lie at residues 273 to 320 (QKKQ…EDDD), 465 to 571 (DEDE…PPGS), 595 to 615 (SNSSNINIHHGHHNTKQEKRY), and 662 to 693 (NNTNSSSPLMNQQQQQQVTQSSLYQHHHQYHQ). Acidic residues-rich tracts occupy residues 306–320 (DEDIDLDSGDEEDDD) and 465–476 (DEDENVSTDDEA). Composition is skewed to polar residues over residues 489–516 (DGNNQLFTPKSPNAFSSNSSLTLNNHPQ) and 524–563 (PSATSQYSLFSNKNNRTHESTSGLNSTCNTPTHISISSFA). A compositionally biased stretch (low complexity) spans 666 to 685 (SSSPLMNQQQQQQVTQSSLY).

Belongs to the cyclin family. As to quaternary structure, interacts with CDC28. The CDC28-CCN1 complex associates with septin CDC11 upon hyphal induction.

In terms of biological role, G1/S-specific cyclin essential for the control of the cell cycle at the G1/S (start) transition and for maintenance of filamentous growth. Through binding to CDC28 controls the phosphorylation of CDC11 and SEC2 upon induction of filamentous growth. The chain is G1/S-specific cyclin CCN1 (CCN1) from Candida albicans (strain SC5314 / ATCC MYA-2876) (Yeast).